A 125-amino-acid polypeptide reads, in one-letter code: Glycine cleavage system H protein (125 aa).

The 83-residue stretch at 19–101 (EVTVGITDHA…YHEGWLVKLK (83 aa)) folds into the Lipoyl-binding domain. Position 60 is an N6-lipoyllysine (K60).

The protein belongs to the GcvH family. As to quaternary structure, the glycine cleavage system is composed of four proteins: P, T, L and H. (R)-lipoate is required as a cofactor.

The glycine cleavage system catalyzes the degradation of glycine. The H protein shuttles the methylamine group of glycine from the P protein to the T protein. This is Glycine cleavage system H protein from Legionella pneumophila (strain Corby).